The primary structure comprises 324 residues: Histidine N-acetyltransferase (324 aa).

The N-acetyltransferase domain occupies 15 to 151 (FEFVLAAEKE…GILLLSFNAP (137 aa)).

It carries out the reaction L-histidine + acetyl-CoA = N(alpha)-acetyl-L-histidine + CoA + H(+). Its function is as follows. Enzyme responsible for the N-acetyl-histidine (NAH) synthesis, which is a major constituent of brain and lens of ectothermic vertebrates. This chain is Histidine N-acetyltransferase (hisat), found in Xenopus tropicalis (Western clawed frog).